Reading from the N-terminus, the 182-residue chain is Transcription termination/antitermination protein NusG (182 aa).

One can recognise a KOW domain in the interval 131–161; sequence GEVVRVNDGPFADFNGTVEEVDYEKSRLKVS.

This sequence belongs to the NusG family.

In terms of biological role, participates in transcription elongation, termination and antitermination. The chain is Transcription termination/antitermination protein NusG from Vibrio cholerae serotype O1 (strain ATCC 39315 / El Tor Inaba N16961).